A 1832-amino-acid polypeptide reads, in one-letter code: Zinc finger protein 646 (1832 aa).

C2H2-type zinc fingers lie at residues 8–31 (LSCS…ELLH), 48–70 (YRCQ…RRTH), 75–97 (FPCT…MRTH), 239–261 (YKCS…RQSH), 266–288 (YPCA…SRLH), 294–316 (YHCP…QQSH), 374–396 (FRCG…RKSH), and 401–424 (YPCS…RAHH). Residues 26-47 (HRELLHPSPNQDSEEADSIPRP) are disordered. A compositionally biased stretch (basic residues) spans 94–108 (MRTHAPEGRRRHRPP). The disordered stretch occupies residues 94–200 (MRTHAPEGRR…TNSARAPPLP (107 aa)). The span at 313-329 (QQSHEGERQEPRWEEKG) shows a compositional bias: basic and acidic residues. Residues 313 to 346 (QQSHEGERQEPRWEEKGMPTTNGHTDESSQDQLP) form a disordered region. A Glycyl lysine isopeptide (Lys-Gly) (interchain with G-Cter in SUMO2) cross-link involves residue lysine 451. 2 C2H2-type zinc fingers span residues 465-487 (YKCS…RHSH) and 492-514 (YQCS…VRVH). Residues lysine 534 and lysine 557 each participate in a glycyl lysine isopeptide (Lys-Gly) (interchain with G-Cter in SUMO2) cross-link. A C2H2-type 11 zinc finger spans residues 575–597 (HICSICGLLFEDAESLERHGLTH). The residue at position 612 (serine 612) is a Phosphoserine. C2H2-type zinc fingers lie at residues 617–639 (FACR…RQTH) and 644–666 (FSCG…LRRH). The tract at residues 660-810 (KNHLRRHSRR…QPNSSSHSAN (151 aa)) is disordered. Residues 661–678 (NHLRRHSRRRSRRHRKRA) show a composition bias toward basic residues. Lysine 688 participates in a covalent cross-link: Glycyl lysine isopeptide (Lys-Gly) (interchain with G-Cter in SUMO2). The segment covering 735–767 (EGDKCGLERDETHFQGDKESGGTGEGLERKDAS) has biased composition (basic and acidic residues). A compositionally biased stretch (polar residues) spans 798 to 810 (ATGQPNSSSHSAN). C2H2-type zinc fingers lie at residues 821 to 843 (HTCS…RPCH), 848 to 870 (YQCS…FQNH), and 881 to 904 (FLCC…RQAH). The segment at 901-931 (RQAHSSSGMTEGSEEEGEEEGVAEAAPARSP) is disordered. Acidic residues predominate over residues 912–922 (GSEEEGEEEGV). The C2H2-type 17; degenerate zinc-finger motif lies at 958 to 980 (HICGCCGQTYDDLGSLERHHQSQ). C2H2-type zinc fingers lie at residues 1052–1074 (FRCN…RKIH) and 1079–1101 (FLCP…LRNH). Residues 1103 to 1148 (RCKGSEPQVGPIPEAAGSSELQVGPIPEGGSNKPQHMAEEGPGQAE) are disordered. Residues lysine 1157, lysine 1168, and lysine 1178 each participate in a glycyl lysine isopeptide (Lys-Gly) (interchain with G-Cter in SUMO2) cross-link. C2H2-type zinc fingers lie at residues 1203 to 1225 (FSCE…RQSH), 1230 to 1252 (FGCQ…RRIH), 1258 to 1280 (FRCS…QRVH), 1299 to 1321 (FRCG…RRSH), 1326 to 1348 (YSCP…QRLH), and 1364 to 1386 (VRCA…LREH). The disordered stretch occupies residues 1274-1294 (ASHQRVHMERRGGGGTRKATR). Disordered regions lie at residues 1377–1481 (GSLE…WVPQ) and 1509–1529 (TLSH…QPGS). The span at 1378-1393 (SLERHLREHEETEREP) shows a compositional bias: basic and acidic residues. Positions 1406–1417 (SEANLTGSQGLE) are enriched in polar residues. The span at 1427–1438 (PHLEDGVPRPGE) shows a compositional bias: basic and acidic residues. Gly residues predominate over residues 1460–1475 (GKAGGWPVGGGLGNHS). 6 consecutive C2H2-type zinc fingers follow at residues 1557 to 1579 (HYCL…SHNH), 1585 to 1607 (FACP…LQAH), 1677 to 1699 (FRCT…QKAH), 1704 to 1726 (YPCS…SRTH), 1732 to 1754 (HCCS…GRVH), and 1761 to 1783 (FTCP…QQQH). Residues 1606-1672 (AHARGHSQVP…QAVTSMAAED (67 aa)) are disordered. The disordered stretch occupies residues 1781-1832 (QQHQEEWTVAGSGAPVAPVTGRGDLPLPPPPTPTTPLLDPSPQWPADLSFSL).

It belongs to the krueppel C2H2-type zinc-finger protein family.

It localises to the nucleus. Its function is as follows. May be involved in transcriptional regulation. The polypeptide is Zinc finger protein 646 (Homo sapiens (Human)).